The primary structure comprises 156 residues: 6,7-dimethyl-8-ribityllumazine synthase (156 aa).

5-amino-6-(D-ribitylamino)uracil contacts are provided by residues Trp-33, 64–66, and 86–88; these read SVE and VIL. Residue 91–92 participates in (2S)-2-hydroxy-3-oxobutyl phosphate binding; sequence ET. The active-site Proton donor is His-94. Residue Ile-119 participates in 5-amino-6-(D-ribitylamino)uracil binding. Arg-133 is a (2S)-2-hydroxy-3-oxobutyl phosphate binding site.

The protein belongs to the DMRL synthase family.

It catalyses the reaction (2S)-2-hydroxy-3-oxobutyl phosphate + 5-amino-6-(D-ribitylamino)uracil = 6,7-dimethyl-8-(1-D-ribityl)lumazine + phosphate + 2 H2O + H(+). Its pathway is cofactor biosynthesis; riboflavin biosynthesis; riboflavin from 2-hydroxy-3-oxobutyl phosphate and 5-amino-6-(D-ribitylamino)uracil: step 1/2. Functionally, catalyzes the formation of 6,7-dimethyl-8-ribityllumazine by condensation of 5-amino-6-(D-ribitylamino)uracil with 3,4-dihydroxy-2-butanone 4-phosphate. This is the penultimate step in the biosynthesis of riboflavin. In Tropheryma whipplei (strain TW08/27) (Whipple's bacillus), this protein is 6,7-dimethyl-8-ribityllumazine synthase.